Here is a 31-residue protein sequence, read N- to C-terminus: Conotoxin pc6d (31 aa).

3 cysteine pairs are disulfide-bonded: C2-C20, C9-C25, and C19-C29.

It belongs to the conotoxin O1 superfamily. In terms of tissue distribution, expressed by the venom duct.

The protein localises to the secreted. The protein is Conotoxin pc6d of Conus pictus (Cone snail).